Consider the following 297-residue polypeptide: N-acetylmuramic acid 6-phosphate etherase (297 aa).

Residues 55-218 form the SIS domain; the sequence is ITKHFKQGGR…STGAMVGIGK (164 aa). Residue E83 is the Proton donor of the active site. E114 is an active-site residue.

It belongs to the GCKR-like family. MurNAc-6-P etherase subfamily. As to quaternary structure, homodimer.

It carries out the reaction N-acetyl-D-muramate 6-phosphate + H2O = N-acetyl-D-glucosamine 6-phosphate + (R)-lactate. It participates in amino-sugar metabolism; N-acetylmuramate degradation. Specifically catalyzes the cleavage of the D-lactyl ether substituent of MurNAc 6-phosphate, producing GlcNAc 6-phosphate and D-lactate. The chain is N-acetylmuramic acid 6-phosphate etherase from Oenococcus oeni (strain ATCC BAA-331 / PSU-1).